Reading from the N-terminus, the 91-residue chain is Putative membrane protein insertion efficiency factor (91 aa).

The segment at 66–91 is disordered; it reads GGVDPVPSCGCHSDKETTPKEKSDNA. A compositionally biased stretch (basic and acidic residues) spans 77 to 91; sequence HSDKETTPKEKSDNA.

The protein belongs to the UPF0161 family.

It is found in the cell inner membrane. In terms of biological role, could be involved in insertion of integral membrane proteins into the membrane. This Hydrogenovibrio crunogenus (strain DSM 25203 / XCL-2) (Thiomicrospira crunogena) protein is Putative membrane protein insertion efficiency factor.